Here is a 425-residue protein sequence, read N- to C-terminus: Alpha/beta hydrolase xenA (425 aa).

Residue aspartate 366 is part of the active site.

This sequence belongs to the AB hydrolase superfamily. FUS2 hydrolase family. In terms of assembly, homodimer.

The protein operates within mycotoxin biosynthesis. In terms of biological role, alpha/beta hydrolase; part of the gene cluster that mediates the biosynthesis of xenoacremones such as xenoacremone A, a compound that shows inhibitory activity toward the PI3K/AKT signaling pathway and which has the ability to induce apoptosis of A549 lung cancer cells. Within the pathway, cooperation of the hybrid PKS-NRPS xenE and the trans-acting enoyl reductase xenG is responsible for the formation of the reduced tyrosine-nonaketide derivative. The alpha/beta hydrolase xenA then accelerates intramolecular nucleophilic attack to give a pyrrolidone derivative. Subsequently, three enzymes, xenF, xenD, and xenC, coordinately participate in the conversion to xenoacremone B. XenF catalyzes sigmatropic rearrangement to form an A-ring, which leads to an unusual intermediate with a hexane ring, which is required for the formation of the tricarbocyclic product. Epoxidation catalyzed by xenD and the formation of the paracyclophane ether catalyzed by xenC initiate a spontaneous intramolecular Diels-Alder (IMDA) reaction to yield xenoacremone B. Spontaneous hydration of xenoacremone B leads to the formation of xenoacremone A, which undergoes subsequent methylation to afford xenoacremone C. The sequence is that of Alpha/beta hydrolase xenA from Xenoacremonium sinensis (Endophyte fungus).